The primary structure comprises 492 residues: Catalase (492 aa).

Catalysis depends on residues H65 and N138. Residue Y348 participates in heme binding.

This sequence belongs to the catalase family. Homotetramer. Requires heme as cofactor.

The protein localises to the cytoplasm. The protein resides in the cytosol. It localises to the peroxisome matrix. The enzyme catalyses 2 H2O2 = O2 + 2 H2O. Its function is as follows. Catalyzes the degradation of hydrogen peroxide (H(2)O(2)) generated by peroxisomal oxidases to water and oxygen, thereby protecting cells from the toxic effects of hydrogen peroxide. In Triticum aestivum (Wheat), this protein is Catalase (CATA).